A 204-amino-acid polypeptide reads, in one-letter code: N-(5'-phosphoribosyl)anthranilate isomerase (204 aa).

The protein belongs to the TrpF family.

It catalyses the reaction N-(5-phospho-beta-D-ribosyl)anthranilate = 1-(2-carboxyphenylamino)-1-deoxy-D-ribulose 5-phosphate. Its pathway is amino-acid biosynthesis; L-tryptophan biosynthesis; L-tryptophan from chorismate: step 3/5. The protein is N-(5'-phosphoribosyl)anthranilate isomerase of Bacillus cereus (strain ZK / E33L).